The following is a 587-amino-acid chain: Serine/threonine-protein phosphatase 2A 65 kDa regulatory subunit A beta isoform (587 aa).

Position 2 is an N-acetylserine (S2). 14 HEAT repeats span residues 2–42 (SMID…ALGE), 44–80 (RTRKELIPFLSENNDDDDEVLLAMAEELGVFIPYVGG), 81–119 (VEYAHVLLPPLETLSTVEETCVREKAVESLCRVGSQMRE), 158–196 (DMLKTELRSLYTQLCQDDMPMVRRAAATNLGKFAATVES), 197–235 (AHLKTDVMSMFEDLTQDDQDSVRLLAVEGCAALGKLLEP), 236–274 (QDCVQHILPVIVNFSQDKSWRVRYMVANQLYELCEAVGP), 275–313 (EPTRTELVPAYVRLLRDNEAEVRIAAAGKVTKFCRILNP), 315–352 (IAIQHILPCVKELSSDSSQHVRSALASVIMGMAPVLGK), 353–391 (DATIEHLLPIFLSLLKDEFPDVRLNIISKLDQVNQVIGI), 393–430 (LLSQSLLPAIVELAEDRHWRVRLAIIEYIPLLASQLGV), 432–469 (FFDDKLGALCMQWLQDKVHSIRDAAANNLKRLAEEFGP), 470–508 (EWAMQHIVPQVLEMVNNPHYLYRMTILRAVSLLAPVMGS), 509–547 (EITCSKLLPVVMTASKDRVPNIKFNVAKVLQSLIPIVDQ), and 549–586 (VVEKTIRPGLVELSEDPDVDVRFFANQALQSIDNVMMS).

This sequence belongs to the phosphatase 2A regulatory subunit A family. As to quaternary structure, PP2A consists of a common heterodimeric core enzyme, composed of a 36 kDa catalytic subunit (subunit C) and a 65 kDa constant regulatory subunit (subunit A), that associates with a variety of regulatory subunits such as subunits B (the R2/B/PR55/B55, R3/B''/PR72/PR130/PR59 and R5/B'/B56 families). Interacts with B'THETA. Interacts with SRK2E/OST1. Interacts with SIC/RON3. In terms of tissue distribution, ubiquitous, with higher levels in roots and flowers (at protein level).

It localises to the cytoplasm. The protein resides in the cytosol. The protein localises to the nucleus. It is found in the peroxisome. Functionally, the A subunit of protein phosphatase 2A serves as a scaffolding molecule to coordinate the assembly of the catalytic subunit and a variable regulatory B subunit. Involved during developmental process such as seedling and floral developments. Seems to act as a negative regulator of PP2A catalytic activity. Associates with the serine/threonine-protein phosphatase PP2A catalytic subunit C and regulatory subunit B' to positively regulates beta-oxidation of fatty acids and protoauxins in peroxisomes by dephosphorylating peroxisomal beta-oxidation-related proteins. The protein is Serine/threonine-protein phosphatase 2A 65 kDa regulatory subunit A beta isoform (PP2AA2) of Arabidopsis thaliana (Mouse-ear cress).